Reading from the N-terminus, the 523-residue chain is Ribosomal protein uS12 methylthiotransferase RimO (523 aa).

Positions 7 to 134 constitute an MTTase N-terminal domain; that stretch reads RRVALITLGC…IATHLAAVLA (128 aa). C16, C52, C97, C192, C196, and C199 together coordinate [4Fe-4S] cluster. One can recognise a Radical SAM core domain in the interval 178–409; sequence LTAGPVAVLK…DLVEQLTAAR (232 aa). The TRAM domain maps to 411-492; it reads DARIGSRVQV…GVDLIAEFIA (82 aa).

Belongs to the methylthiotransferase family. RimO subfamily. The cofactor is [4Fe-4S] cluster.

It localises to the cytoplasm. The enzyme catalyses L-aspartate(89)-[ribosomal protein uS12]-hydrogen + (sulfur carrier)-SH + AH2 + 2 S-adenosyl-L-methionine = 3-methylsulfanyl-L-aspartate(89)-[ribosomal protein uS12]-hydrogen + (sulfur carrier)-H + 5'-deoxyadenosine + L-methionine + A + S-adenosyl-L-homocysteine + 2 H(+). Its function is as follows. Catalyzes the methylthiolation of an aspartic acid residue of ribosomal protein uS12. This is Ribosomal protein uS12 methylthiotransferase RimO from Frankia casuarinae (strain DSM 45818 / CECT 9043 / HFP020203 / CcI3).